Consider the following 246-residue polypeptide: Probable transcriptional regulatory protein Dshi_2762 (246 aa).

The protein belongs to the TACO1 family.

It is found in the cytoplasm. The sequence is that of Probable transcriptional regulatory protein Dshi_2762 from Dinoroseobacter shibae (strain DSM 16493 / NCIMB 14021 / DFL 12).